We begin with the raw amino-acid sequence, 354 residues long: Serum paraoxonase/lactonase 3 (354 aa).

Asn29 is a glycosylation site (N-linked (GlcNAc...) asparagine). The cysteines at positions 42 and 352 are disulfide-linked. 2 residues coordinate Ca(2+): Glu53 and Asp54. The active-site Proton acceptor is His114. Residue Ile116 participates in Ca(2+) binding. Ser165 bears the Phosphoserine mark. Ca(2+) contacts are provided by Asn167, Asp168, Asn223, Asp268, and Asn269. 2 N-linked (GlcNAc...) asparagine glycosylation sites follow: Asn269 and Asn323.

The protein belongs to the paraoxonase family. In terms of assembly, homodimer. It depends on Ca(2+) as a cofactor. Post-translationally, the signal sequence is not cleaved.

It is found in the secreted. The protein resides in the extracellular space. It carries out the reaction a phenyl acetate + H2O = a phenol + acetate + H(+). The catalysed reaction is An aryl dialkyl phosphate + H2O = dialkyl phosphate + an aryl alcohol.. It catalyses the reaction an N-acyl-L-homoserine lactone + H2O = an N-acyl-L-homoserine + H(+). Functionally, has low activity towards the organophosphate paraxon and aromatic carboxylic acid esters. Rapidly hydrolyzes lactones such as statin prodrugs (e.g. lovastatin). Hydrolyzes aromatic lactones and 5- or 6-member ring lactones with aliphatic substituents but not simple lactones or those with polar substituents. The protein is Serum paraoxonase/lactonase 3 (PON3) of Homo sapiens (Human).